The chain runs to 387 residues: 3-ketoacyl-CoA thiolase (387 aa).

The active-site Acyl-thioester intermediate is Cys-91. Residues His-343 and Cys-373 each act as proton acceptor in the active site.

It belongs to the thiolase-like superfamily. Thiolase family. As to quaternary structure, heterotetramer of two alpha chains (FadB) and two beta chains (FadA).

The protein resides in the cytoplasm. The enzyme catalyses an acyl-CoA + acetyl-CoA = a 3-oxoacyl-CoA + CoA. Its pathway is lipid metabolism; fatty acid beta-oxidation. Its function is as follows. Catalyzes the final step of fatty acid oxidation in which acetyl-CoA is released and the CoA ester of a fatty acid two carbons shorter is formed. This chain is 3-ketoacyl-CoA thiolase, found in Cronobacter sakazakii (strain ATCC BAA-894) (Enterobacter sakazakii).